Consider the following 461-residue polypeptide: Cysteine--tRNA ligase (461 aa).

Cysteine 28 contacts Zn(2+). Residues 30 to 40 (VTIYDLCHIGH) carry the 'HIGH' region motif. The Zn(2+) site is built by cysteine 209, histidine 234, and glutamate 238. Positions 266–270 (KMSKS) match the 'KMSKS' region motif. Lysine 269 contacts ATP.

Belongs to the class-I aminoacyl-tRNA synthetase family. In terms of assembly, monomer. The cofactor is Zn(2+).

The protein localises to the cytoplasm. The catalysed reaction is tRNA(Cys) + L-cysteine + ATP = L-cysteinyl-tRNA(Cys) + AMP + diphosphate. The chain is Cysteine--tRNA ligase from Hamiltonella defensa subsp. Acyrthosiphon pisum (strain 5AT).